Reading from the N-terminus, the 99-residue chain is Small ribosomal subunit protein eS24 (99 aa).

The protein belongs to the eukaryotic ribosomal protein eS24 family. In terms of assembly, may be present in 2 copies per 70S ribosome. Part of the 30S ribosomal subunit, where it binds 16S rRNA at its canonical site at the bse of the body, as well as a possible second 50S binding site near 23S rRNA helix 45.

In Pyrococcus furiosus (strain ATCC 43587 / DSM 3638 / JCM 8422 / Vc1), this protein is Small ribosomal subunit protein eS24.